Consider the following 332-residue polypeptide: Ketol-acid reductoisomerase (NAD(+)) (332 aa).

The 181-residue stretch at 1–181 folds into the KARI N-terminal Rossmann domain; sequence MKIYYDQDAD…GATRAGVIQT (181 aa). NAD(+) contacts are provided by residues 24–27, serine 50, and 82–85; these read YGSQ and DEKQ. Histidine 107 is an active-site residue. Glycine 133 provides a ligand contact to NAD(+). The KARI C-terminal knotted domain occupies 182 to 327; that stretch reads TFKEETETDL…ARLRGMMPWL (146 aa). Positions 190, 194, 226, and 230 each coordinate Mg(2+). Residue serine 251 participates in substrate binding.

Belongs to the ketol-acid reductoisomerase family. Mg(2+) serves as cofactor.

It catalyses the reaction (2R)-2,3-dihydroxy-3-methylbutanoate + NAD(+) = (2S)-2-acetolactate + NADH + H(+). Its pathway is amino-acid biosynthesis; L-isoleucine biosynthesis; L-isoleucine from 2-oxobutanoate: step 2/4. It participates in amino-acid biosynthesis; L-valine biosynthesis; L-valine from pyruvate: step 2/4. In terms of biological role, involved in the biosynthesis of branched-chain amino acids (BCAA). Catalyzes an alkyl-migration followed by a ketol-acid reduction of (S)-2-acetolactate (S2AL) to yield (R)-2,3-dihydroxy-isovalerate. In the isomerase reaction, S2AL is rearranged via a Mg-dependent methyl migration to produce 3-hydroxy-3-methyl-2-ketobutyrate (HMKB). In the reductase reaction, this 2-ketoacid undergoes a metal-dependent reduction by NADH to yield (R)-2,3-dihydroxy-isovalerate. The polypeptide is Ketol-acid reductoisomerase (NAD(+)) (Thermacetogenium phaeum (strain ATCC BAA-254 / DSM 26808 / PB)).